Consider the following 295-residue polypeptide: Glutamyl-Q tRNA(Asp) synthetase (295 aa).

L-glutamate contacts are provided by residues 5 to 9 (RFAPS) and Glu-41. Positions 8–18 (PSPTGLLHIGS) match the 'HIGH' region motif. Residues Cys-97, Cys-99, Tyr-117, and Cys-121 each coordinate Zn(2+). Residues Tyr-178 and Arg-196 each coordinate L-glutamate. The short motif at 234–238 (KWSKQ) is the 'KMSKS' region element. Position 237 (Lys-237) interacts with ATP.

This sequence belongs to the class-I aminoacyl-tRNA synthetase family. GluQ subfamily. Requires Zn(2+) as cofactor.

In terms of biological role, catalyzes the tRNA-independent activation of glutamate in presence of ATP and the subsequent transfer of glutamate onto a tRNA(Asp). Glutamate is transferred on the 2-amino-5-(4,5-dihydroxy-2-cyclopenten-1-yl) moiety of the queuosine in the wobble position of the QUC anticodon. The polypeptide is Glutamyl-Q tRNA(Asp) synthetase (Neisseria meningitidis serogroup C (strain 053442)).